A 429-amino-acid polypeptide reads, in one-letter code: Sex determination protein fox-1 (429 aa).

Low complexity predominate over residues 156–180; the sequence is ATTAGSTNGSAAVTQPDPSTSSGPD. The segment at 156–188 is disordered; it reads ATTAGSTNGSAAVTQPDPSTSSGPDGPKRLHVS. One can recognise an RRM domain in the interval 183–259; sequence KRLHVSNIPF…RKIEVNCATA (77 aa).

Interacts with sup-12. In terms of tissue distribution, in males and hermaphrodites expressed in a subset of cells in the head and tail. Expressed in the pharynx, intestine and in muscles from the vulva and body wall.

It is found in the nucleus. RNA-binding protein that regulates tissue-specific alternative splicing events by binding to 5'-UGCAUG-3' and 5'-GCACG-3' elements. Also binds to poly(A), poly(G), poly(C), or poly(U) stretches of RNA. Plays a role in the sex determination pathway and X chromosome dosage compensation, and together with sex-1 is involved in making the distinction between one and two X-chromosomes. Binds to 5'-GCAUG-3' and 5'-GCACG-3' elements in intron 6 of the pre-mRNA of the sex-determining factor xol-1 to promote its alternative splicing and together with sex-1 negatively regulates the expression of xol-1 to promote hermaphrodite development. Negatively regulates the expression of the active isoform of xol-1 (isoform b) by promoting intron 6 retention and the deletion of exon 7 coding sequences in hermaphrodite embryos. Furthermore, binding to the pre-mRNA of xol-1 can also direct the use of an alternative 3' splice site enabling the xol-1 transcript to be trans-spliced to unrelated genes on chromosome 2, which also leads to xol-1 exon 7 deletion. Does not seem to regulate the retention of introns 1 to 5 of xol-1 pre-mRNA. Plays a role in the association of the dosage compensation complex proteins dpy-27 and sdc-3 with the hermaphrodite X chromosomes. Binds to 5'-UGCAUG-3' elements in intron 7 of the pre-mRNA of unc-32 to promote its alternative splicing in neuronal tissues. Binds to 5'-UGCAUG-3' elements in intron 4 of the pre-mRNA of egl-15 to promote its alternative splicing in body wall muscle tissues. Promotes binding of RNA-binding protein sup-12 to target RNA. Plays a role in male mating behavior. The protein is Sex determination protein fox-1 of Caenorhabditis elegans.